The sequence spans 412 residues: UPF0761 membrane protein lpg0643 (412 aa).

6 consecutive transmembrane segments (helical) span residues 36 to 56, 99 to 119, 137 to 157, 177 to 197, 210 to 230, and 241 to 261; these read ALAF…LAIF, LSIW…FTIE, AFLL…LSLA, ILHY…YVVV, GGLV…YYLI, and AFAT…ITLL.

The protein belongs to the UPF0761 family.

The protein resides in the cell inner membrane. The protein is UPF0761 membrane protein lpg0643 of Legionella pneumophila subsp. pneumophila (strain Philadelphia 1 / ATCC 33152 / DSM 7513).